Reading from the N-terminus, the 240-residue chain is Thiamine-phosphate synthase (240 aa).

Residues 63-67 and N94 contribute to the 4-amino-2-methyl-5-(diphosphooxymethyl)pyrimidine site; that span reads QYREK. Residues D95 and D114 each coordinate Mg(2+). Position 133 (T133) interacts with 4-amino-2-methyl-5-(diphosphooxymethyl)pyrimidine. A 2-[(2R,5Z)-2-carboxy-4-methylthiazol-5(2H)-ylidene]ethyl phosphate-binding site is contributed by 159–161; that stretch reads TFT. K162 serves as a coordination point for 4-amino-2-methyl-5-(diphosphooxymethyl)pyrimidine. Residues G190 and 210-211 contribute to the 2-[(2R,5Z)-2-carboxy-4-methylthiazol-5(2H)-ylidene]ethyl phosphate site; that span reads IS.

It belongs to the thiamine-phosphate synthase family. Requires Mg(2+) as cofactor.

It carries out the reaction 2-[(2R,5Z)-2-carboxy-4-methylthiazol-5(2H)-ylidene]ethyl phosphate + 4-amino-2-methyl-5-(diphosphooxymethyl)pyrimidine + 2 H(+) = thiamine phosphate + CO2 + diphosphate. The catalysed reaction is 2-(2-carboxy-4-methylthiazol-5-yl)ethyl phosphate + 4-amino-2-methyl-5-(diphosphooxymethyl)pyrimidine + 2 H(+) = thiamine phosphate + CO2 + diphosphate. It catalyses the reaction 4-methyl-5-(2-phosphooxyethyl)-thiazole + 4-amino-2-methyl-5-(diphosphooxymethyl)pyrimidine + H(+) = thiamine phosphate + diphosphate. It functions in the pathway cofactor biosynthesis; thiamine diphosphate biosynthesis; thiamine phosphate from 4-amino-2-methyl-5-diphosphomethylpyrimidine and 4-methyl-5-(2-phosphoethyl)-thiazole: step 1/1. Its function is as follows. Condenses 4-methyl-5-(beta-hydroxyethyl)thiazole monophosphate (THZ-P) and 2-methyl-4-amino-5-hydroxymethyl pyrimidine pyrophosphate (HMP-PP) to form thiamine monophosphate (TMP). This Methanosarcina mazei (strain ATCC BAA-159 / DSM 3647 / Goe1 / Go1 / JCM 11833 / OCM 88) (Methanosarcina frisia) protein is Thiamine-phosphate synthase.